We begin with the raw amino-acid sequence, 180 residues long: Adenine phosphoribosyltransferase (180 aa).

It belongs to the purine/pyrimidine phosphoribosyltransferase family. As to quaternary structure, homodimer.

Its subcellular location is the cytoplasm. The enzyme catalyses AMP + diphosphate = 5-phospho-alpha-D-ribose 1-diphosphate + adenine. It functions in the pathway purine metabolism; AMP biosynthesis via salvage pathway; AMP from adenine: step 1/1. Functionally, catalyzes a salvage reaction resulting in the formation of AMP, that is energically less costly than de novo synthesis. The polypeptide is Adenine phosphoribosyltransferase (Mannheimia succiniciproducens (strain KCTC 0769BP / MBEL55E)).